The chain runs to 163 residues: Lysosomal enzyme trafficking factor (163 aa).

Helical transmembrane passes span 40-60 and 98-118; these read MGWI…YYVF and LPFW…FLFL.

It belongs to the LYSET family. Interacts with GNPTAB; this interaction is important for proper localization of GNPTAB in Golgi stacks. Interacts with MBTPS1.

The protein resides in the golgi apparatus membrane. Its function is as follows. Required for mannose-6-phosphate-dependent trafficking of lysosomal enzymes. LYSET bridges GlcNAc-1-phosphate transferase (GNPTAB), to the membrane-bound transcription factor site-1 protease (MBTPS1), thus allowing proteolytic activation of the GNPTAB. GNPTAB is involved in the regulation of M6P-dependent Golgi-to-lysosome trafficking of lysosomal enzymes. LYSET is thus an essential factor for maturation and delivery of lysosomal hydrolases. This chain is Lysosomal enzyme trafficking factor (LYSET), found in Bos taurus (Bovine).